A 440-amino-acid chain; its full sequence is Trigger factor (440 aa).

The PPIase FKBP-type domain maps to 160–253 (KDTVIGDALR…VTEVKRLELP (94 aa)).

This sequence belongs to the FKBP-type PPIase family. Tig subfamily.

It localises to the cytoplasm. The catalysed reaction is [protein]-peptidylproline (omega=180) = [protein]-peptidylproline (omega=0). In terms of biological role, involved in protein export. Acts as a chaperone by maintaining the newly synthesized protein in an open conformation. Functions as a peptidyl-prolyl cis-trans isomerase. The chain is Trigger factor from Chlorobium chlorochromatii (strain CaD3).